A 257-amino-acid polypeptide reads, in one-letter code: Phosphatidylglycerol--prolipoprotein diacylglyceryl transferase (257 aa).

The next 7 membrane-spanning stretches (helical) occupy residues 13-33 (FGPI…AVGG), 49-69 (FLLN…RLMF), 88-108 (IYEG…AGLY), 123-143 (FAVV…IFNH), 152-172 (FFFG…FLLI), 186-202 (YQFW…RGVF), and 223-243 (IGLF…AYWM). Arg136 lines the a 1,2-diacyl-sn-glycero-3-phospho-(1'-sn-glycerol) pocket.

It belongs to the Lgt family.

The protein localises to the cell membrane. The enzyme catalyses L-cysteinyl-[prolipoprotein] + a 1,2-diacyl-sn-glycero-3-phospho-(1'-sn-glycerol) = an S-1,2-diacyl-sn-glyceryl-L-cysteinyl-[prolipoprotein] + sn-glycerol 1-phosphate + H(+). It participates in protein modification; lipoprotein biosynthesis (diacylglyceryl transfer). In terms of biological role, catalyzes the transfer of the diacylglyceryl group from phosphatidylglycerol to the sulfhydryl group of the N-terminal cysteine of a prolipoprotein, the first step in the formation of mature lipoproteins. In Caldanaerobacter subterraneus subsp. tengcongensis (strain DSM 15242 / JCM 11007 / NBRC 100824 / MB4) (Thermoanaerobacter tengcongensis), this protein is Phosphatidylglycerol--prolipoprotein diacylglyceryl transferase.